The sequence spans 175 residues: Albumin-1 (175 aa).

Residues Cys135 and Cys141 are joined by a disulfide bond.

It belongs to the protease inhibitor I3 (leguminous Kunitz-type inhibitor) family.

2S seed storage protein. The chain is Albumin-1 from Psophocarpus tetragonolobus (Winged bean).